A 692-amino-acid polypeptide reads, in one-letter code: Protein artemis (692 aa).

At threonine 380 the chain carries Phosphothreonine. Position 385 is a phosphoserine (serine 385). Disordered regions lie at residues 503–555 and 640–660; these read RLEN…DSQS and STNA…PEAE. Over residues 507–520 the composition is skewed to polar residues; sequence FPSSTEAGGSQSPK. Low complexity predominate over residues 530–543; that stretch reads THISSQNSSQSTHI. 2 stretches are compositionally biased toward polar residues: residues 544 to 555 and 640 to 650; these read TEQGSQGWDSQS and STNADSQSSSD. Serine 645 bears the Phosphoserine; by ATM mark.

The protein belongs to the DNA repair metallo-beta-lactamase (DRMBL) family. As to quaternary structure, interacts with LIG4; the interaction is direct. Interacts with ATM. Interacts with BRCA1. Interacts with PRKDC. Interacts with TP53BP1. Also exhibits ATM- and phosphorylation-dependent interaction with the MRN complex, composed of MRE11, RAD50, and NBN. Phosphorylation on undefined residues by PRKDC may stimulate endonucleolytic activity on 5' and 3' hairpins and overhangs. PRKDC must remain present, even after phosphorylation, for efficient hairpin opening. Also phosphorylated by ATM in response to ionizing radiation (IR) and by ATR in response to ultraviolet (UV) radiation.

The protein resides in the nucleus. In terms of biological role, required for V(D)J recombination, the process by which exons encoding the antigen-binding domains of immunoglobulins and T-cell receptor proteins are assembled from individual V, (D), and J gene segments. V(D)J recombination is initiated by the lymphoid specific RAG endonuclease complex, which generates site specific DNA double strand breaks (DSBs). These DSBs present two types of DNA end structures: hairpin sealed coding ends and phosphorylated blunt signal ends. These ends are independently repaired by the non homologous end joining (NHEJ) pathway to form coding and signal joints respectively. This protein exhibits single-strand specific 5'-3' exonuclease activity in isolation, and acquires endonucleolytic activity on 5' and 3' hairpins and overhangs when in a complex with PRKDC. The latter activity is required specifically for the resolution of closed hairpins prior to the formation of the coding joint. May also be required for the repair of complex DSBs induced by ionizing radiation, which require substantial end-processing prior to religation by NHEJ. In Pongo abelii (Sumatran orangutan), this protein is Protein artemis (DCLRE1C).